A 190-amino-acid polypeptide reads, in one-letter code: RNA-binding protein OPG065 (190 aa).

Positions 5–70 (YIDERSDAEI…DIPPRWFMTT (66 aa)) constitute a Z-binding domain. A DRBM domain is found at 117–184 (NPVTIINEYC…AKLAVDKLLG (68 aa)).

This sequence belongs to the orthopoxvirus OPG065 family. Interacts with host G1P2/ISG15. Interacts with host EIF2AK2/PKR. Interacts with host ZBP1.

RNA-binding protein that plays a role in the inhibition of multiple cellular antiviral responses activated by double-stranded RNA (dsRNA), such as inhibition of PKR activation, necroptosis, and IFN-mediated antiviral activities. Recognizes and binds Z-RNA structures via its Z-binding domain and dsRNA via its DRBM domain: RNA-binding activity is required to escape host ZBP1-dependent necroptosis. Mechanistically, the Z-binding domain binds Z-RNAs that are produced during vaccinia virus infection, thereby competing with Z-RNA detection by host ZBP1, suppressing ZBP1-dependent necroptosis. Acts as a key inhibitor of the interferon response by blocking the phosphorylation and subsequent activation of IRF3 and IRF7 kinases that are required for interferon-alpha gene expression. Inhibits NF-kappa-B activation and the ubiquitin-like protein ISG15, which is an early antiviral protein. The binding with host ISG15 subsequently blocks host ISGylation. The polypeptide is RNA-binding protein OPG065 (OPG065) (Homo sapiens (Human)).